Consider the following 423-residue polypeptide: Lysosomal acid phosphatase (423 aa).

The N-terminal stretch at 1 to 30 is a signal peptide; the sequence is MAGKRSGWSRAALLQLLLGVNLVVMPPTQA. Residues 31 to 380 are Lumenal-facing; that stretch reads RSLRFVTLLY…QVASGPADTE (350 aa). His42 functions as the Nucleophile in the catalytic mechanism. 6 N-linked (GlcNAc...) asparagine glycosylation sites follow: Asn92, Asn133, Asn167, Asn177, Asn191, and Asn267. Cystine bridges form between Cys159/Cys370, Cys212/Cys310, and Cys345/Cys349. Asp287 functions as the Proton donor in the catalytic mechanism. Asn322 and Asn331 each carry an N-linked (GlcNAc...) asparagine glycan. A helical membrane pass occupies residues 381–401; that stretch reads VIVALAVCGSILFLLIVLLLT. Over 402-423 the chain is Cytoplasmic; that stretch reads VLFRMQAQPPGYRHVADGEDHA.

This sequence belongs to the histidine acid phosphatase family. Post-translationally, the membrane-bound form is converted to the soluble form by sequential proteolytic processing. First, the C-terminal cytoplasmic tail is removed. Cleavage by a lysosomal protease releases the soluble form in the lysosome lumen.

The protein resides in the lysosome membrane. Its subcellular location is the lysosome lumen. The catalysed reaction is a phosphate monoester + H2O = an alcohol + phosphate. This Pongo abelii (Sumatran orangutan) protein is Lysosomal acid phosphatase (ACP2).